The sequence spans 139 residues: Small ribosomal subunit protein bS6 (139 aa).

Residues 95–121 (AVTEQSEMLKAEESRNERRERRERPND) show a composition bias toward basic and acidic residues. Residues 95-139 (AVTEQSEMLKAEESRNERRERRERPNDNAEGADGDDNSDSDNADE) form a disordered region. The segment covering 124-139 (EGADGDDNSDSDNADE) has biased composition (acidic residues).

Belongs to the bacterial ribosomal protein bS6 family.

Binds together with bS18 to 16S ribosomal RNA. The chain is Small ribosomal subunit protein bS6 from Pseudomonas aeruginosa (strain LESB58).